We begin with the raw amino-acid sequence, 200 residues long: MAWTSTLPAHLLNLIKNSKYVHVATCSKDCIPSVALMNYIYVPGEKLFGQTDNKNDYIIFVSPQDTQKFYNIKENPKVALLFHDWIIANNLSVGKESISGTPTPTSIPHEEQRQSELLNLLQELNQAELNQMSASIGGETEIVNPESEESKYYKDLILKANPDAKAFIFEKNTAVVKVRIDNARVSNNENRTMFLSKGKS.

Residues F60, K68, and N125 each coordinate FMN.

It belongs to the pyridoxamine 5'-phosphate oxidase family. FMN is required as a cofactor.

The protein resides in the cytoplasm. The protein localises to the nucleus. This Saccharomyces cerevisiae (strain ATCC 204508 / S288c) (Baker's yeast) protein is Pyridoxamine 5'-phosphate oxidase homolog.